The chain runs to 1184 residues: MVGTKAWVFSFLVLEVTSVLGRQTMLTQSVRRVQPGKKNPSIFAKPADTLESPGEWTTWFNIDYPGGKGDYERLDAIRFYYGDRVCARPLRLEARTTDWTPAGSTGQVVHGSPREGFWCLNREQRPGQNCSNYTVRFLCPPGSLRRDTERIWSPWSPWSKCSAACGQTGVQTRTRICLAEMVSLCSEASEEGQHCMGQDCTACDLTCPMGQVNADCDACMCQDFMLHGAVSLPGGAPASGAAIYLLTKTPKLLTQTDSDGRFRIPGLCPDGKSILKITKVKFAPIVLTMPKTSLKAATIKAEFVRAETPYMVMNPETKARRAGQSVSLCCKATGKPRPDKYFWYHNDTLLDPSLYKHESKLVLRKLQQHQAGEYFCKAQSDAGAVKSKVAQLIVIASDETPCNPVPESYLIRLPHDCFQNATNSFYYDVGRCPVKTCAGQQDNGIRCRDAVQNCCGISKTEEREIQCSGYTLPTKVAKECSCQRCTETRSIVRGRVSAADNGEPMRFGHVYMGNSRVSMTGYKGTFTLHVPQDTERLVLTFVDRLQKFVNTTKVLPFNKKGSAVFHEIKMLRRKKPITLEAMETNIIPLGEVVGEDPMAELEIPSRSFYRQNGEPYIGKVKASVTFLDPRNISTATAAQTDLNFINDEGDTFPLRTYGMFSVDFRDEVTSEPLNAGKVKVHLDSTQVKMPEHISTVKLWSLNPDTGLWEEEGDFKFENQRRNKREDRTFLVGNLEIRERRLFNLDVPESRRCFVKVRAYRSERFLPSEQIQGVVISVINLEPRTGFLSNPRAWGRFDSVITGPNGACVPAFCDDQSPDAYSAYVLASLAGEELQAVESSPKFNPNAIGVPQPYLNKLNYRRTDHEDPRVKKTAFQISMAKPRPNSAEESNGPIYAFENLRACEEAPPSAAHFRFYQIEGDRYDYNTVPFNEDDPMSWTEDYLAWWPKPMEFRACYIKVKIVGPLEVNVRSRNMGGTHRQTVGKLYGIRDVRSTRDRDQPNVSAACLEFKCSGMLYDQDRVDRTLVKVIPQGSCRRASVNPMLHEYLVNHLPLAVNNDTSEYTMLAPLDPLGHNYGIYTVTDQDPRTAKEIALGRCFDGTSDGSSRIMKSNVGVALTFNCVERQVGRQSAFQYLQSTPAQSPAAGTVQGRVPSRRQQRASRGGQRQGGVVASLRFPRVAQQPLIN.

An N-terminal signal peptide occupies residues 1-21 (MVGTKAWVFSFLVLEVTSVLG). N-linked (GlcNAc...) asparagine glycosylation is found at Asn129 and Asn132. The TSP type-1 domain maps to 149–201 (ERIWSPWSPWSKCSAACGQTGVQTRTRICLAEMVSLCSEASEEGQHCMGQDCT). 4 cysteine pairs are disulfide-bonded: Cys161-Cys195, Cys165-Cys200, Cys177-Cys185, and Cys330-Cys376. An Ig-like C2-type domain is found at 309-395 (PYMVMNPETK…KSKVAQLIVI (87 aa)). N-linked (GlcNAc...) asparagine glycans are attached at residues Asn346, Asn420, Asn550, Asn631, Asn1000, and Asn1056. Positions 1136–1170 (TPAQSPAAGTVQGRVPSRRQQRASRGGQRQGGVVA) are disordered. The segment covering 1158–1170 (ASRGGQRQGGVVA) has biased composition (low complexity).

In terms of assembly, monomer. Interacts with TGFB1. In terms of processing, cleaved into 2 chains possibly by a furin-like protease upon or preceding secretion. In terms of tissue distribution, specifically expressed in cartilage. Localizes in the intermediates layer of articular cartilage but neither in the superficial nor in the deepest regions. Specifically and highly expressed in intervertebral disk tissue. Expression increases with aging in hip articular cartilage. Overexpressed in articular hyaline cartilage from patients with calcium pyrophosphate dihydrate crystal deposition disease (CPPD). Expression in intervertebral disk tissue from individuals with lumbar disk disease increases as disk degeneration progresses.

It localises to the secreted. The protein localises to the extracellular space. Its subcellular location is the extracellular matrix. In terms of biological role, probably plays a role in cartilage scaffolding. May act by antagonizing TGF-beta1 (TGFB1) and IGF1 functions. Has the ability to suppress IGF1-induced proliferation and sulfated proteoglycan synthesis, and inhibits ligand-induced IGF1R autophosphorylation. May inhibit TGFB1-mediated induction of cartilage matrix genes via its interaction with TGFB1. Overexpression may lead to impair chondrocyte growth and matrix repair and indirectly promote inorganic pyrophosphate (PPi) supersaturation in aging and osteoarthritis cartilage. This is Cartilage intermediate layer protein 1 (CILP) from Homo sapiens (Human).